Reading from the N-terminus, the 393-residue chain is NAD(P)H-quinone oxidoreductase subunit H, chloroplastic (393 aa).

It belongs to the complex I 49 kDa subunit family. As to quaternary structure, NDH is composed of at least 16 different subunits, 5 of which are encoded in the nucleus.

It is found in the plastid. The protein localises to the chloroplast thylakoid membrane. It carries out the reaction a plastoquinone + NADH + (n+1) H(+)(in) = a plastoquinol + NAD(+) + n H(+)(out). The catalysed reaction is a plastoquinone + NADPH + (n+1) H(+)(in) = a plastoquinol + NADP(+) + n H(+)(out). NDH shuttles electrons from NAD(P)H:plastoquinone, via FMN and iron-sulfur (Fe-S) centers, to quinones in the photosynthetic chain and possibly in a chloroplast respiratory chain. The immediate electron acceptor for the enzyme in this species is believed to be plastoquinone. Couples the redox reaction to proton translocation, and thus conserves the redox energy in a proton gradient. This is NAD(P)H-quinone oxidoreductase subunit H, chloroplastic from Nicotiana sylvestris (Wood tobacco).